The sequence spans 193 residues: Ribosome hibernation promotion factor (193 aa).

This sequence belongs to the HPF/YfiA ribosome-associated protein family. Long HPF subfamily. As to quaternary structure, interacts with 100S ribosomes.

The protein resides in the cytoplasm. Its function is as follows. Might modulate either transcription and/or translation. In terms of biological role, required for dimerization of active 70S ribosomes into 100S ribosomes in stationary phase; 100S ribosomes are translationally inactive and sometimes present during exponential growth. The protein is Ribosome hibernation promotion factor of Picosynechococcus sp. (strain ATCC 27264 / PCC 7002 / PR-6) (Agmenellum quadruplicatum).